A 1759-amino-acid polypeptide reads, in one-letter code: Putative ATP-dependent RNA helicase TDRD12 (1759 aa).

In terms of domain architecture, Tudor 1 spans 74–153; the sequence is FQNLEQVWFS…KLSNTETRAV (80 aa). Low complexity predominate over residues 480–495; it reads NSAASESSTKSSMDSS. Residues 480–506 are disordered; sequence NSAASESSTKSSMDSSRISDEDDLSSD. Positions 611–789 constitute a Helicase ATP-binding domain; that stretch reads WGTILRGLST…DFLEPIVLKA (179 aa). Position 624-631 (624-631) interacts with ATP; it reads SPPRSGKT. A Helicase C-terminal domain is found at 823–980; the sequence is NVLQFIDSVQ…NVPKILDEVS (158 aa). Positions 1335 to 1394 constitute a Tudor 2 domain; sequence GSNVGDIVLAKFPDDSMYERARIDHIYSEDKVKCFFVDQGDWRDVSTNDLATITENFITQ. The CS domain occupies 1618–1704; it reads LSKPKICWSQ…LMCRNWLALT (87 aa).

In terms of assembly, interacts (via Tudor domain 2) with Siwi. Component of the PET complex, at least composed of EXD1, SIWI, TDRD12 and piRNAs. In terms of tissue distribution, expressed in the yolk cells. Not detected in yolk granules.

The protein resides in the chromosome. Its subcellular location is the cytoplasm. The protein localises to the cytosol. It localises to the nucleus membrane. The enzyme catalyses ATP + H2O = ADP + phosphate + H(+). Functionally, probable ATP-binding RNA helicase required during spermatogenesis to repress transposable elements and preventing their mobilization, which is essential for the germline integrity. Acts via the piRNA metabolic process, which mediates the repression of transposable elements during meiosis by forming complexes composed of piRNAs and Piwi proteins and governs the methylation and subsequent repression of transposons. The polypeptide is Putative ATP-dependent RNA helicase TDRD12 (TDRD12) (Bombyx mori (Silk moth)).